A 225-amino-acid chain; its full sequence is 7-cyano-7-deazaguanine synthase (225 aa).

10 to 20 (LSGGIDSATAA) serves as a coordination point for ATP. 4 residues coordinate Zn(2+): C191, C199, C202, and C205.

Belongs to the QueC family. The cofactor is Zn(2+).

It catalyses the reaction 7-carboxy-7-deazaguanine + NH4(+) + ATP = 7-cyano-7-deazaguanine + ADP + phosphate + H2O + H(+). The protein operates within purine metabolism; 7-cyano-7-deazaguanine biosynthesis. Functionally, catalyzes the ATP-dependent conversion of 7-carboxy-7-deazaguanine (CDG) to 7-cyano-7-deazaguanine (preQ(0)). In Prochlorococcus marinus (strain NATL2A), this protein is 7-cyano-7-deazaguanine synthase.